The primary structure comprises 224 residues: Uridylate kinase (224 aa).

9-10 (GS) provides a ligand contact to ATP. Gly-43 is a UMP binding site. The ATP site is built by Gly-44 and Arg-48. UMP-binding positions include Asp-65 and 113-119 (VVPGQTT). 3 residues coordinate ATP: Thr-139, Phe-145, and Asp-148.

It belongs to the UMP kinase family. Homohexamer.

Its subcellular location is the cytoplasm. It catalyses the reaction UMP + ATP = UDP + ADP. The protein operates within pyrimidine metabolism; CTP biosynthesis via de novo pathway; UDP from UMP (UMPK route): step 1/1. Its activity is regulated as follows. Inhibited by UTP. Functionally, catalyzes the reversible phosphorylation of UMP to UDP. In Methanocella arvoryzae (strain DSM 22066 / NBRC 105507 / MRE50), this protein is Uridylate kinase.